We begin with the raw amino-acid sequence, 102 residues long: Small ribosomal subunit protein uS10 (102 aa).

This sequence belongs to the universal ribosomal protein uS10 family. Part of the 30S ribosomal subunit.

Involved in the binding of tRNA to the ribosomes. This is Small ribosomal subunit protein uS10 (rpsJ) from Bacillus subtilis (strain 168).